Consider the following 876-residue polypeptide: Alanine--tRNA ligase (876 aa).

Positions 564, 568, 666, and 670 each coordinate Zn(2+).

It belongs to the class-II aminoacyl-tRNA synthetase family. In terms of assembly, homotetramer. Zn(2+) serves as cofactor.

It localises to the cytoplasm. The enzyme catalyses tRNA(Ala) + L-alanine + ATP = L-alanyl-tRNA(Ala) + AMP + diphosphate. Catalyzes the attachment of alanine to tRNA(Ala) in a two-step reaction: alanine is first activated by ATP to form Ala-AMP and then transferred to the acceptor end of tRNA(Ala). Also edits incorrectly charged Ser-tRNA(Ala) and Gly-tRNA(Ala) via its editing domain. The chain is Alanine--tRNA ligase from Salmonella paratyphi A (strain ATCC 9150 / SARB42).